The primary structure comprises 247 residues: Probable transcriptional regulatory protein DVU_2259 (247 aa).

The segment at 1–22 is disordered; the sequence is MAGHSKWANIQHRKGRQDAKRG.

The protein belongs to the TACO1 family.

It is found in the cytoplasm. The polypeptide is Probable transcriptional regulatory protein DVU_2259 (Nitratidesulfovibrio vulgaris (strain ATCC 29579 / DSM 644 / CCUG 34227 / NCIMB 8303 / VKM B-1760 / Hildenborough) (Desulfovibrio vulgaris)).